Consider the following 179-residue polypeptide: Natural killer cells antigen CD94 (179 aa).

Over 1-10 (MAVFKTTLWW) the chain is Cytoplasmic. Residues 11–31 (LISGTLGIICLSLTATLGILL) traverse the membrane as a helical; Signal-anchor for type II membrane protein segment. Residues 32-179 (KNSFTKLSIE…NRYICKQQLI (148 aa)) lie on the Extracellular side of the membrane. Intrachain disulfides connect Cys58–Cys70 and Cys61–Cys72. The 108-residue stretch at 68–175 (YRCNCYFISS…CEDKNRYICK (108 aa)) folds into the C-type lectin domain. N-linked (GlcNAc...) asparagine glycans are attached at residues Asn83 and Asn132. 2 disulfide bridges follow: Cys89/Cys174 and Cys152/Cys166.

As to quaternary structure, can form disulfide-bonded heterodimer with NKG2 family members KLRC1 and KLRC2. KLRD1-KLRC1 heterodimer interacts with peptide-bound MHC-E-B2M heterotrimeric complex. KLRD1 plays a prominent role in directly interacting with MHC-E. KLRD1-KLRC1 interacts with much higher affinity with peptide-bound MHC-E-B2M than KLRD1-KLRC2. Interacts with the adapter protein TYROBP/DAP12; this interaction is required for cell surface expression and cell activation. In terms of tissue distribution, natural killer cells.

The protein localises to the cell membrane. Its function is as follows. Immune receptor involved in self-nonself discrimination. In complex with KLRC1 or KLRC2 on cytotoxic and regulatory lymphocyte subsets, recognizes non-classical major histocompatibility (MHC) class Ib molecule MHC-E loaded with self-peptides derived from the signal sequence of classical MHC class Ia and non-classical MHC class Ib molecules. Enables cytotoxic cells to monitor the expression of MHC class I molecules in healthy cells and to tolerate self. Primarily functions as a ligand binding subunit as it lacks the capacity to signal. KLRD1-KLRC1 acts as an immune inhibitory receptor. Key inhibitory receptor on natural killer (NK) cells that regulates their activation and effector functions. Dominantly counteracts T cell receptor signaling on a subset of memory/effector CD8-positive T cells as part of an antigen-driven response to avoid autoimmunity. On intraepithelial CD8-positive gamma-delta regulatory T cells triggers TGFB1 secretion, which in turn limits the cytotoxic programming of intraepithelial CD8-positive alpha-beta T cells, distinguishing harmless from pathogenic antigens. In MHC-E-rich tumor microenvironment, acts as an immune inhibitory checkpoint and may contribute to progressive loss of effector functions of NK cells and tumor-specific T cells, a state known as cell exhaustion. Upon MHC-E-peptide binding, transmits intracellular signals through KLRC1 immunoreceptor tyrosine-based inhibition motifs (ITIMs) by recruiting INPP5D/SHIP-1 and INPPL1/SHIP-2 tyrosine phosphatases to ITIMs, and ultimately opposing signals transmitted by activating receptors through dephosphorylation of proximal signaling molecules. Functionally, KLRD1-KLRC2 acts as an immune activating receptor. On cytotoxic lymphocyte subsets recognizes MHC-E loaded with signal sequence-derived peptides from non-classical MHC class Ib MHC-G molecules, likely playing a role in the generation and effector functions of adaptive NK cells and in maternal-fetal tolerance during pregnancy. Regulates the effector functions of terminally differentiated cytotoxic lymphocyte subsets, and in particular may play a role in adaptive NK cell response to viral infection. Upon MHC-E-peptide binding, transmits intracellular signals via the adapter protein TYROBP/DAP12, triggering the phosphorylation of proximal signaling molecules and cell activation. The chain is Natural killer cells antigen CD94 (KLRD1) from Pongo pygmaeus (Bornean orangutan).